The sequence spans 346 residues: Phosphoribosylformylglycinamidine cyclo-ligase (346 aa).

This sequence belongs to the AIR synthase family.

It is found in the cytoplasm. The catalysed reaction is 2-formamido-N(1)-(5-O-phospho-beta-D-ribosyl)acetamidine + ATP = 5-amino-1-(5-phospho-beta-D-ribosyl)imidazole + ADP + phosphate + H(+). It participates in purine metabolism; IMP biosynthesis via de novo pathway; 5-amino-1-(5-phospho-D-ribosyl)imidazole from N(2)-formyl-N(1)-(5-phospho-D-ribosyl)glycinamide: step 2/2. The chain is Phosphoribosylformylglycinamidine cyclo-ligase from Bacillus cereus (strain G9842).